We begin with the raw amino-acid sequence, 271 residues long: Transmembrane protein 150A (271 aa).

The Cytoplasmic segment spans residues 1–2; the sequence is MT. The chain crosses the membrane as a helical span at residues 3–23; sequence AWILLPVSLSAFSITGIWTVY. Residues 24–75 are Extracellular-facing; it reads AMAVMNHHVCPVENWSYNESCPPDPAEQGGPKTCCTLDDVPLISKCGSYPPE. 2 N-linked (GlcNAc...) asparagine glycosylation sites follow: Asn-37 and Asn-41. The helical transmembrane segment at 76–96 threads the bilayer; it reads SCLFSLIGNMGAFMVALICLL. Topologically, residues 97-108 are cytoplasmic; that stretch reads RYGQLLEQSRHS. The chain crosses the membrane as a helical span at residues 109-129; the sequence is WVNTTALITGCTNAAGLLVVG. Residues 130–140 lie on the Extracellular side of the membrane; that stretch reads NFQVDHARSLH. A helical transmembrane segment spans residues 141-161; it reads YVGAGVAFPAGLLFVCLHCAL. Topologically, residues 162-178 are cytoplasmic; that stretch reads SYQGATAPLDLAVAYLR. A helical membrane pass occupies residues 179–199; sequence SVLAVIAFITLVLSGVFFVHE. The Extracellular segment spans residues 200-211; it reads SSQLQHGAALCE. A helical membrane pass occupies residues 212 to 232; the sequence is WVCVIDILIFYGTFSYEFGAV. Residues 233–271 lie on the Cytoplasmic side of the membrane; it reads SSDTLVAALQPTPGRACKSSGSSSTSTHLNCAPESIAMI.

This sequence belongs to the DRAM/TMEM150 family. In terms of assembly, interacts (via C-terminal cytoplasmic tail) with PI4KA.

It localises to the cell membrane. In terms of biological role, regulates localization of phosphatidylinositol 4-kinase (PI4K) to the plasma membrane, possibly by reducing the association of TTC7 (TTC7A or TTC7B) with the PI4K complex. Acts as a regulator of phosphatidylinositol 4-phosphate (PtdIns(4)P) synthesis. May also play a role in fasting-induced catabolism. The chain is Transmembrane protein 150A (TMEM150A) from Homo sapiens (Human).